Reading from the N-terminus, the 707-residue chain is Ribosomal RNA large subunit methyltransferase K/L (707 aa).

One can recognise a THUMP domain in the interval 43 to 154 (QIYRCCLWSR…KDKAILGVDM (112 aa)).

The protein belongs to the methyltransferase superfamily. RlmKL family.

The protein resides in the cytoplasm. The enzyme catalyses guanosine(2445) in 23S rRNA + S-adenosyl-L-methionine = N(2)-methylguanosine(2445) in 23S rRNA + S-adenosyl-L-homocysteine + H(+). The catalysed reaction is guanosine(2069) in 23S rRNA + S-adenosyl-L-methionine = N(2)-methylguanosine(2069) in 23S rRNA + S-adenosyl-L-homocysteine + H(+). In terms of biological role, specifically methylates the guanine in position 2445 (m2G2445) and the guanine in position 2069 (m7G2069) of 23S rRNA. This Vibrio parahaemolyticus serotype O3:K6 (strain RIMD 2210633) protein is Ribosomal RNA large subunit methyltransferase K/L.